Reading from the N-terminus, the 264-residue chain is NADH dehydrogenase [ubiquinone] iron-sulfur protein 3, mitochondrial (264 aa).

A mitochondrion-targeting transit peptide spans 1–36 (MAAAAVARLWWRGILGASALTRGTGRPSVLLLPVRR).

It belongs to the complex I 30 kDa subunit family. In terms of assembly, core subunit of respiratory chain NADH dehydrogenase (Complex I) which is composed of 45 different subunits. Interacts with NDUFAF3. Interacts with RAB5IF. Found in subcomplexes containing subunits NDUFS2, MT-ND1 and NDUFA13.

It localises to the mitochondrion inner membrane. It catalyses the reaction a ubiquinone + NADH + 5 H(+)(in) = a ubiquinol + NAD(+) + 4 H(+)(out). In terms of biological role, core subunit of the mitochondrial membrane respiratory chain NADH dehydrogenase (Complex I) which catalyzes electron transfer from NADH through the respiratory chain, using ubiquinone as an electron acceptor. Essential for the catalytic activity and assembly of complex I. The polypeptide is NADH dehydrogenase [ubiquinone] iron-sulfur protein 3, mitochondrial (NDUFS3) (Homo sapiens (Human)).